Consider the following 1038-residue polypeptide: Protein argonaute 1D (1038 aa).

2 disordered regions span residues 1–58 (MGSR…GAAP) and 110–134 (APHEPPANVSSPEAASPEASSPRSL). 2 stretches are compositionally biased toward gly residues: residues 18–29 (RGGGRGGGGRGR) and 43–52 (GHGGRGGAGY). The span at 115 to 134 (PANVSSPEAASPEASSPRSL) shows a compositional bias: low complexity. The PAZ domain maps to 380 to 493 (PVIDFVIQLL…LPMEVCKIVE (114 aa)). Residues 669-990 (LLIGLLPDNN…AAFRARFYME (322 aa)) form the Piwi domain. Positions 992 to 1021 (DSSDSGSMASGRGGGSSTSRSTRAAGGGAV) are disordered.

This sequence belongs to the argonaute family. Ago subfamily.

Functionally, probably involved in the RNA silencing pathway. May bind to short RNAs such as microRNAs (miRNAs) or short interfering RNAs (siRNAs), and represses the translation of mRNAs which are complementary to them. In Oryza sativa subsp. japonica (Rice), this protein is Protein argonaute 1D (AGO1D).